The sequence spans 105 residues: Large ribosomal subunit protein bL21 (105 aa).

This sequence belongs to the bacterial ribosomal protein bL21 family. As to quaternary structure, part of the 50S ribosomal subunit. Contacts protein L20.

Functionally, this protein binds to 23S rRNA in the presence of protein L20. The chain is Large ribosomal subunit protein bL21 from Aliarcobacter butzleri (strain RM4018) (Arcobacter butzleri).